The following is a 954-amino-acid chain: Glycine dehydrogenase (decarboxylating) (954 aa).

N6-(pyridoxal phosphate)lysine is present on K704.

The protein belongs to the GcvP family. The glycine cleavage system is composed of four proteins: P, T, L and H. The cofactor is pyridoxal 5'-phosphate.

It catalyses the reaction N(6)-[(R)-lipoyl]-L-lysyl-[glycine-cleavage complex H protein] + glycine + H(+) = N(6)-[(R)-S(8)-aminomethyldihydrolipoyl]-L-lysyl-[glycine-cleavage complex H protein] + CO2. The glycine cleavage system catalyzes the degradation of glycine. The P protein binds the alpha-amino group of glycine through its pyridoxal phosphate cofactor; CO(2) is released and the remaining methylamine moiety is then transferred to the lipoamide cofactor of the H protein. The sequence is that of Glycine dehydrogenase (decarboxylating) from Rhizobium etli (strain CIAT 652).